Here is a 388-residue protein sequence, read N- to C-terminus: Succinate--CoA ligase [ADP-forming] subunit beta (388 aa).

Residues 9–244 (KALFAEYGLP…PSQDDAREAH (236 aa)) enclose the ATP-grasp domain. ATP contacts are provided by residues K46, 53–55 (GRG), E99, T102, and E107. Residues N199 and D213 each contribute to the Mg(2+) site. Substrate-binding positions include N264 and 321 to 323 (GIV).

This sequence belongs to the succinate/malate CoA ligase beta subunit family. As to quaternary structure, heterotetramer of two alpha and two beta subunits. It depends on Mg(2+) as a cofactor.

The enzyme catalyses succinate + ATP + CoA = succinyl-CoA + ADP + phosphate. The catalysed reaction is GTP + succinate + CoA = succinyl-CoA + GDP + phosphate. It functions in the pathway carbohydrate metabolism; tricarboxylic acid cycle; succinate from succinyl-CoA (ligase route): step 1/1. Functionally, succinyl-CoA synthetase functions in the citric acid cycle (TCA), coupling the hydrolysis of succinyl-CoA to the synthesis of either ATP or GTP and thus represents the only step of substrate-level phosphorylation in the TCA. The beta subunit provides nucleotide specificity of the enzyme and binds the substrate succinate, while the binding sites for coenzyme A and phosphate are found in the alpha subunit. This is Succinate--CoA ligase [ADP-forming] subunit beta from Shewanella sediminis (strain HAW-EB3).